The following is a 342-amino-acid chain: Ion-translocating oxidoreductase complex subunit D (342 aa).

A run of 3 helical transmembrane segments spans residues 42–62 (GSVINVLWAVIVALVSEALFL), 68–90 (NIAFYLKDYSAVVTAVLLGLALP), and 124–144 (AMVGYVLLLISFPVAMTQWLA). Threonine 171 bears the FMN phosphoryl threonine mark. Helical transmembrane passes span 200 to 220 (FAGLGWEWVNLAFLLGGLYLI), 227 to 247 (WHIPAGFLAGLGLPALLAWLI), 252 to 272 (FADPLFQLFSGGAMLGAFFIA), 286 to 306 (LVYALLIGVLIWVIRTFGGYP), and 308 to 328 (AVAFSVLLLNLSAPFIDYYTQ).

This sequence belongs to the NqrB/RnfD family. The complex is composed of six subunits: RnfA, RnfB, RnfC, RnfD, RnfE and RnfG. Requires FMN as cofactor.

Its subcellular location is the cell inner membrane. In terms of biological role, part of a membrane-bound complex that couples electron transfer with translocation of ions across the membrane. The polypeptide is Ion-translocating oxidoreductase complex subunit D (Alcanivorax borkumensis (strain ATCC 700651 / DSM 11573 / NCIMB 13689 / SK2)).